A 201-amino-acid chain; its full sequence is Small ribosomal subunit protein uS4 (201 aa).

The S4 RNA-binding domain maps to 91–154 (TRLDNVVYRA…RKMEWFEEAQ (64 aa)).

The protein belongs to the universal ribosomal protein uS4 family. In terms of assembly, part of the 30S ribosomal subunit. Contacts protein S5. The interaction surface between S4 and S5 is involved in control of translational fidelity.

One of the primary rRNA binding proteins, it binds directly to 16S rRNA where it nucleates assembly of the body of the 30S subunit. Functionally, with S5 and S12 plays an important role in translational accuracy. The protein is Small ribosomal subunit protein uS4 of Corynebacterium ammoniagenes (Brevibacterium ammoniagenes).